Here is a 588-residue protein sequence, read N- to C-terminus: Beta-(1--&gt;2)glucan export ATP-binding/permease protein NdvA (588 aa).

The ABC transmembrane type-1 domain maps to 21 to 301 (VAVVVIANVI…MRQFVTQIFE (281 aa)). Transmembrane regions (helical) follow at residues 22-42 (AVVV…PVLF), 57-77 (PILI…VAVA), 136-156 (THLA…AMDL), 158-178 (LSFV…WVMG), 248-268 (TAST…VKNG), and 272-292 (VGDV…LDQM). The region spanning 335–569 (VEFRNINFGF…GGRFTSLLRT (235 aa)) is the ABC transporter domain. An ATP-binding site is contributed by 368 to 375 (GPTGAGKT).

Belongs to the ABC transporter superfamily. Beta-(1--&gt;2)glucan exporter (TC 3.A.1.108.1) family. As to quaternary structure, homodimer.

It localises to the cell inner membrane. It carries out the reaction [(1-&gt;2)-beta-D-glucosyl](n)(in) + ATP + H2O = [(1-&gt;2)-beta-D-glucosyl](n)(out) + ADP + phosphate + H(+). In terms of biological role, involved in beta-(1--&gt;2)glucan export which is required for crown gall tumor formation. Transmembrane domains (TMD) form a pore in the inner membrane and the ATP-binding domain (NBD) is responsible for energy generation. In Rhizobium radiobacter (Agrobacterium tumefaciens), this protein is Beta-(1--&gt;2)glucan export ATP-binding/permease protein NdvA.